A 229-amino-acid polypeptide reads, in one-letter code: Large ribosomal subunit protein uL1 (229 aa).

This sequence belongs to the universal ribosomal protein uL1 family. As to quaternary structure, part of the 50S ribosomal subunit.

In terms of biological role, binds directly to 23S rRNA. The L1 stalk is quite mobile in the ribosome, and is involved in E site tRNA release. Functionally, protein L1 is also a translational repressor protein, it controls the translation of the L11 operon by binding to its mRNA. In Streptococcus pneumoniae (strain JJA), this protein is Large ribosomal subunit protein uL1.